Consider the following 266-residue polypeptide: Dioicin-2 (266 aa).

2 disulfide bridges follow: cysteine 32–cysteine 263 and cysteine 85–cysteine 102. Glutamate 176 is a catalytic residue.

The protein resides in the secreted. It is found in the extracellular space. Its subcellular location is the golgi apparatus. The protein localises to the vacuole. The enzyme catalyses Endohydrolysis of the N-glycosidic bond at one specific adenosine on the 28S rRNA.. In terms of biological role, nicks pBR322 dsDNA. Has adenine polynucleotide glycosidase activity on herring sperm ssDNA. This Phytolacca dioica (Bella sombra tree) protein is Dioicin-2.